The sequence spans 255 residues: Protein 2b (255 aa).

This sequence belongs to the tobravirus protein 2b family.

It is found in the virion. May function by interacting with a small, flexible domain located at the C-terminus of the CP, forming a bridge between the virus particle and the internal surface of the vector nematode feeding apparatus. The polypeptide is Protein 2b (Tobacco rattle virus (strain TCM)).